We begin with the raw amino-acid sequence, 86 residues long: Toxin To8 (86 aa).

A signal peptide spans 1–20 (MTRFVLFISCFFLIGMVVEC). The LCN-type CS-alpha/beta domain maps to 21-83 (KEGYLLGSRG…LWESDTNECG (63 aa)). 4 disulfides stabilise this stretch: C31-C82, C35-C57, C43-C63, and C47-C65. Residue C82 is modified to Cysteine amide.

The protein belongs to the long (4 C-C) scorpion toxin superfamily. Sodium channel inhibitor family. Beta subfamily. As to expression, expressed by the venom gland.

Its subcellular location is the secreted. Its function is as follows. Beta toxins bind voltage-independently at site-4 of sodium channels (Nav) and shift the voltage of activation toward more negative potentials thereby affecting sodium channel activation and promoting spontaneous and repetitive firing. The polypeptide is Toxin To8 (Tityus obscurus (Amazonian scorpion)).